We begin with the raw amino-acid sequence, 358 residues long: Methylthioribose-1-phosphate isomerase (358 aa).

Residues 54–56, arginine 96, and glutamine 205 each bind substrate; that span reads RGA. The active-site Proton donor is the aspartate 246. A substrate-binding site is contributed by 256 to 257; sequence NK.

Belongs to the eIF-2B alpha/beta/delta subunits family. MtnA subfamily.

It catalyses the reaction 5-(methylsulfanyl)-alpha-D-ribose 1-phosphate = 5-(methylsulfanyl)-D-ribulose 1-phosphate. Its pathway is amino-acid biosynthesis; L-methionine biosynthesis via salvage pathway; L-methionine from S-methyl-5-thio-alpha-D-ribose 1-phosphate: step 1/6. In terms of biological role, catalyzes the interconversion of methylthioribose-1-phosphate (MTR-1-P) into methylthioribulose-1-phosphate (MTRu-1-P). The sequence is that of Methylthioribose-1-phosphate isomerase from Stutzerimonas stutzeri (strain A1501) (Pseudomonas stutzeri).